A 583-amino-acid polypeptide reads, in one-letter code: Eukaryotic translation initiation factor 3 subunit D (583 aa).

The tract at residues 116-150 is disordered; sequence GRAQRGAGQRGGRAGFQRVGAGRGQGDRFYDNRGG. A compositionally biased stretch (basic and acidic residues) spans 140–149; the sequence is QGDRFYDNRG. The interval 298 to 312 is RNA gate; it reads SLDLVTVNENAIDAP. The interval 561–583 is disordered; sequence NTFEEDEEAAAEEEEQKAEEDEE. The span at 563–583 shows a compositional bias: acidic residues; sequence FEEDEEAAAEEEEQKAEEDEE.

It belongs to the eIF-3 subunit D family. In terms of assembly, component of the eukaryotic translation initiation factor 3 (eIF-3) complex.

The protein localises to the cytoplasm. Its function is as follows. mRNA cap-binding component of the eukaryotic translation initiation factor 3 (eIF-3) complex, which is involved in protein synthesis of a specialized repertoire of mRNAs and, together with other initiation factors, stimulates binding of mRNA and methionyl-tRNAi to the 40S ribosome. The eIF-3 complex specifically targets and initiates translation of a subset of mRNAs involved in cell proliferation. In the eIF-3 complex, eif3d specifically recognizes and binds the 7-methylguanosine cap of a subset of mRNAs. This is Eukaryotic translation initiation factor 3 subunit D from Aspergillus oryzae (strain ATCC 42149 / RIB 40) (Yellow koji mold).